Consider the following 244-residue polypeptide: UDP-2,3-diacylglucosamine hydrolase (244 aa).

Asp-8, His-10, Asp-41, Asn-79, and His-114 together coordinate Mn(2+). A substrate-binding site is contributed by 79-80 (NR). 5 residues coordinate substrate: Asp-122, Ser-160, Asn-164, Lys-167, and His-195. Mn(2+)-binding residues include His-195 and His-197.

The protein belongs to the LpxH family. The cofactor is Mn(2+).

It is found in the cell inner membrane. The enzyme catalyses UDP-2-N,3-O-bis[(3R)-3-hydroxytetradecanoyl]-alpha-D-glucosamine + H2O = 2-N,3-O-bis[(3R)-3-hydroxytetradecanoyl]-alpha-D-glucosaminyl 1-phosphate + UMP + 2 H(+). Its pathway is glycolipid biosynthesis; lipid IV(A) biosynthesis; lipid IV(A) from (3R)-3-hydroxytetradecanoyl-[acyl-carrier-protein] and UDP-N-acetyl-alpha-D-glucosamine: step 4/6. Its function is as follows. Hydrolyzes the pyrophosphate bond of UDP-2,3-diacylglucosamine to yield 2,3-diacylglucosamine 1-phosphate (lipid X) and UMP by catalyzing the attack of water at the alpha-P atom. Involved in the biosynthesis of lipid A, a phosphorylated glycolipid that anchors the lipopolysaccharide to the outer membrane of the cell. The chain is UDP-2,3-diacylglucosamine hydrolase from Marinobacter nauticus (strain ATCC 700491 / DSM 11845 / VT8) (Marinobacter aquaeolei).